A 1291-amino-acid polypeptide reads, in one-letter code: 1-phosphatidylinositol 4,5-bisphosphate phosphodiesterase gamma-1 (1291 aa).

The residue at position 2 (Ala-2) is an N-acetylalanine. In terms of domain architecture, PH 1 spans 27–142 (RSLEVGTVMT…WIRGLTWLME (116 aa)). In terms of domain architecture, EF-hand spans 152 to 187 (QIERWLRKQFYSVDRNREDRISAKDLKNMLSQVNYR). Residues Asp-165, Asn-167, Glu-169, Arg-171, and Asp-176 each contribute to the Ca(2+) site. One can recognise a PI-PLC X-box domain in the interval 320–464 (DTMNNPLSHY…LKRKILIKHK (145 aa)). Active-site residues include His-335 and His-380. The PH 2; first part domain maps to 489-523 (SIKNGILYLEDPVNHEWYPHYFVLTSSKIYYSEET). Tyr-506 carries the phosphotyrosine modification. Residues 522-544 (ETSSDQGNEDEEEPKEASGSTEL) are disordered. SH2 domains lie at 550-657 (WFHG…SEPV) and 668-756 (WYHA…RYPI). At Tyr-771 the chain carries Phosphotyrosine; by SYK. Tyr-775 and Tyr-783 each carry phosphotyrosine. Tyr-783 bears the Phosphotyrosine; by ITK, SYK and TXK mark. The region spanning 791–851 (TFKCAVKALF…PSNYVEEMVS (61 aa)) is the SH3 domain. One can recognise a PH 2; second part domain in the interval 895 to 931 (FVFSISMASVAHWSLDVAADSQEELQDWVKKIREVAQ). The 118-residue stretch at 953-1070 (LSELVVYCRP…GYVLQPSVMR (118 aa)) folds into the PI-PLC Y-box domain. At Tyr-977 the chain carries Phosphotyrosine. The region spanning 1071–1194 (DEAFDPFDKS…TGYRAVPLKN (124 aa)) is the C2 domain. Residues Ser-1222, Ser-1228, and Ser-1249 each carry the phosphoserine modification. Residue Tyr-1254 is modified to Phosphotyrosine. Ser-1264 carries the phosphoserine modification. The tract at residues 1271 to 1291 (HFDGRDRRTPRRTRVNGDNRL) is disordered.

As to quaternary structure, interacts with AGAP2 via its SH3 domain. Interacts (via SH2 domain) with RET. Interacts with FLT1 (tyrosine-phosphorylated). Interacts (via SH2 domain) with FGFR1, FGFR2, FGFR3 and FGFR4 (phosphorylated). Interacts with LAT (phosphorylated) upon TCR activation. Interacts (via SH3 domain) with the Pro-rich domain of TNK1. Associates with BLNK, VAV1, GRB2 and NCK1 in a B-cell antigen receptor-dependent fashion. Interacts with CBLB in activated T-cells; which inhibits phosphorylation. Interacts with SHB. Interacts (via SH3 domain) with the Arg/Gly-rich-flanked Pro-rich domains of KHDRBS1/SAM68. This interaction is selectively regulated by arginine methylation of KHDRBS1/SAM68. Interacts with INPP5D/SHIP1, THEMIS and CLNK. Interacts with AXL, FLT4 and KIT. Interacts with RALGPS1. Interacts (via the SH2 domains) with VIL1 (phosphorylated at C-terminus tyrosine phosphorylation sites). Interacts (via SH2 domain) with PDGFRA and PDGFRB (tyrosine phosphorylated). Interacts with PIP5K1C. Interacts with NTRK1 and NTRK2 (phosphorylated upon ligand-binding). Interacts with SYK; activates PLCG1. Interacts with GRB2, LAT and THEMIS upon TCR activation in thymocytes. Interacts with TESPA1; the association is increased with prolonged stimulation of the TCR and may facilitate the assembly of the LAT signalosome. Interacts (via C-terminal proline-rich domain (PRD)) with PLCG1 (via SH3 domain); this interaction leads to guanine nucleotide exchange from PlCG1 to DNM1 and enhances DNM1-dependent endocytosis. The cofactor is Ca(2+). In terms of processing, ubiquitinated by CBLB in activated T-cells. Tyrosine phosphorylated in response to signaling via activated FLT3, KIT and PDGFRA. Tyrosine phosphorylated by activated FGFR1, FGFR2, FGFR3 and FGFR4. Tyrosine phosphorylated by activated FLT1 and KDR. Tyrosine phosphorylated by activated PDGFRB. The receptor-mediated activation of PLCG1 involves its phosphorylation by tyrosine kinases, in response to ligation of a variety of growth factor receptors and immune system receptors. For instance, SYK phosphorylates and activates PLCG1 in response to ligation of the B-cell receptor. May be dephosphorylated by PTPRJ. Phosphorylated by ITK and TXK on Tyr-783 upon TCR activation in T-cells.

The protein resides in the cell projection. Its subcellular location is the lamellipodium. The protein localises to the ruffle. It catalyses the reaction a 1,2-diacyl-sn-glycero-3-phospho-(1D-myo-inositol-4,5-bisphosphate) + H2O = 1D-myo-inositol 1,4,5-trisphosphate + a 1,2-diacyl-sn-glycerol + H(+). It carries out the reaction a 1,2-diacyl-sn-glycero-3-phospho-(1D-myo-inositol) + H2O = 1D-myo-inositol 1-phosphate + a 1,2-diacyl-sn-glycerol + H(+). Its activity is regulated as follows. Activated by phosphorylation on tyrosine residues. In terms of biological role, mediates the production of the second messenger molecules diacylglycerol (DAG) and inositol 1,4,5-trisphosphate (IP3). Plays an important role in the regulation of intracellular signaling cascades. Becomes activated in response to ligand-mediated activation of receptor-type tyrosine kinases, such as PDGFRA, PDGFRB, EGFR, FGFR1, FGFR2, FGFR3 and FGFR4. Plays a role in actin reorganization and cell migration. Guanine nucleotide exchange factor that binds the GTPase DNM1 and catalyzes the dissociation of GDP, allowing a GTP molecule to bind in its place, therefore enhancing DNM1-dependent endocytosis. The chain is 1-phosphatidylinositol 4,5-bisphosphate phosphodiesterase gamma-1 from Bos taurus (Bovine).